The sequence spans 130 residues: Small ribosomal subunit protein uS11 (130 aa).

Residues 109 to 130 are disordered; sequence EDITPIPHDGTGRPGGKRGRRV.

It belongs to the universal ribosomal protein uS11 family. As to quaternary structure, part of the 30S ribosomal subunit.

Its function is as follows. Located on the platform of the 30S subunit. This chain is Small ribosomal subunit protein uS11, found in Methanobrevibacter smithii (strain ATCC 35061 / DSM 861 / OCM 144 / PS).